A 136-amino-acid polypeptide reads, in one-letter code: Large ribosomal subunit protein bL20 (136 aa).

It belongs to the bacterial ribosomal protein bL20 family.

Its function is as follows. Binds directly to 23S ribosomal RNA and is necessary for the in vitro assembly process of the 50S ribosomal subunit. It is not involved in the protein synthesizing functions of that subunit. The polypeptide is Large ribosomal subunit protein bL20 (Tropheryma whipplei (strain Twist) (Whipple's bacillus)).